Consider the following 20-residue polypeptide: DnaJ homolog subfamily C member 1 (20 aa).

Residues 1–20 (WESGDLELFDLVEEVXLNFY) lie on the Lumenal side of the membrane. One can recognise a J domain in the interval 18–20 (NFY).

In terms of assembly, interacts (via SANT 2 domain) with SERPINA3; the interaction delays the formation of the covalent inhibitory complex SERPINA3-chymotrypsin, but does not alter the catalytic activity of SERPINA3. Interacts (via SANT 2 domain) with ITIH4 (via C-terminus); the interaction protects ITIH4 against in vitro cleavage by kallikrein. Interacts (via J domain) with HSPA5. Interacts (via cytosolic domain) with ribosomes.

It localises to the endoplasmic reticulum membrane. The protein resides in the nucleus membrane. The protein localises to the microsome membrane. The sequence is that of DnaJ homolog subfamily C member 1 (DNAJC1) from Canis lupus familiaris (Dog).